A 188-amino-acid chain; its full sequence is Movement protein (188 aa).

Belongs to the tombusvirus/aureusvirus movement protein p22 family. In terms of assembly, interacts with host protein HFI22. In terms of processing, phosphorylated.

The protein resides in the host membrane. In terms of biological role, transports viral genome to neighboring plant cells directly through plasmosdesmata, without any budding. The movement protein allows efficient cell to cell propagation, by bypassing the host cell wall barrier. The sequence is that of Movement protein from Capsicum annuum (Capsicum pepper).